The primary structure comprises 334 residues: F-box protein AUF1 (334 aa).

Residues 1 to 49 (MDAFDAIPDPVVIDILNRVGDVKTLIRCRSVSKRFNSLATQSESLLLQL) enclose the F-box domain.

Part of a SCF (ASK-cullin-F-box) protein ligase complex. Interacts with SKP1A/ASK1, SKP1B/ASK2, ASK11 and ASK13.

It localises to the nucleus. It functions in the pathway protein modification; protein ubiquitination. Its function is as follows. Component of SCF(ASK-cullin-F-box) E3 ubiquitin ligase complexes, which may mediate the ubiquitination and subsequent proteasomal degradation of target proteins. Involved in the control of basipetal and acropetal auxin transport by promoting the distribution and expression of the auxin transporter PIN2. Promotes cytokinin-mediated cell expansion in the root elongation and differentiation zone, without affecting root cell division. In Arabidopsis thaliana (Mouse-ear cress), this protein is F-box protein AUF1.